Reading from the N-terminus, the 302-residue chain is Light-independent protochlorophyllide reductase iron-sulfur ATP-binding protein (302 aa).

ATP contacts are provided by residues 46-51 (GIGKST) and Lys-75. A Mg(2+)-binding site is contributed by Ser-50. Positions 131 and 165 each coordinate [4Fe-4S] cluster. 216–217 (NR) provides a ligand contact to ATP.

The protein belongs to the NifH/BchL/ChlL family. As to quaternary structure, homodimer. Protochlorophyllide reductase is composed of three subunits; BchL, BchN and BchB. The cofactor is [4Fe-4S] cluster.

The catalysed reaction is chlorophyllide a + oxidized 2[4Fe-4S]-[ferredoxin] + 2 ADP + 2 phosphate = protochlorophyllide a + reduced 2[4Fe-4S]-[ferredoxin] + 2 ATP + 2 H2O. The protein operates within porphyrin-containing compound metabolism; bacteriochlorophyll biosynthesis (light-independent). Component of the dark-operative protochlorophyllide reductase (DPOR) that uses Mg-ATP and reduced ferredoxin to reduce ring D of protochlorophyllide (Pchlide) to form chlorophyllide a (Chlide). This reaction is light-independent. The L component serves as a unique electron donor to the NB-component of the complex, and binds Mg-ATP. In Methylocella silvestris (strain DSM 15510 / CIP 108128 / LMG 27833 / NCIMB 13906 / BL2), this protein is Light-independent protochlorophyllide reductase iron-sulfur ATP-binding protein.